A 498-amino-acid chain; its full sequence is Death-associated inhibitor of apoptosis 2 (498 aa).

3 BIR repeats span residues 12 to 77, 116 to 180, and 215 to 280; these read RLAT…SMVL, RLVT…PRVQ, and RLRT…QFVL. Cysteine 249, cysteine 252, histidine 269, and cysteine 276 together coordinate Zn(2+). Residues 451–486 form an RING-type zinc finger; sequence CKVCLDEEVGVVFLPCGHLATCNQCAPSVANCPMCR.

Belongs to the IAP family. In terms of assembly, interacts with the caspase Strica. Interacts (via BIR2 domain) with rpr and grim. Interacts (via the BIR2 and BIR3 domains) with hid. Interacts (via BIR3 domain) with Drice. Interacts with Dredd; likely to bind Dredd simultaneously with Fadd to form a trimeric complex. Caspase-dependent cleavage is required for suppression of Drice-mediated cell death. In terms of tissue distribution, expressed in both principal and stellar cells of the Malphigian tubules.

It localises to the nucleus. The protein localises to the cytoplasm. Required for activation of NF-kappaB transcription factors in the immune deficiency (Imd) signaling cascade which is essential for innate immune responses upon infection by Gram-negative bacteria. Promotes cytoplasmic cleavage of Rel and its translocation to the nucleus where it drives expression of antimicrobial peptides. Binds, polyubiquitinates and activates Dredd which is required for Rel-mediated induction of antimicrobial peptides. Anti-apoptotic protein which binds, ubiquitinates and inactivates the effector caspase Drice. Suppresses rpr and hid-dependent cell death in the eye. However, has also been shown to have little, if any, role in the regulation of the canonical caspase-dependent apoptosis pathway. Plays a role in regulating the expression of ion channels. This is Death-associated inhibitor of apoptosis 2 (Diap2) from Drosophila melanogaster (Fruit fly).